Consider the following 1089-residue polypeptide: Protein phosphatase 1 regulatory subunit 3A (1089 aa).

Residues 32-57 (KATFKPGFSPQPSRRGSGSSEDMYLD) form a disordered region. Residues 37-51 (PGFSPQPSRRGSGSS) are compositionally biased toward low complexity. Phosphoserine; by GSK3 is present on residues Ser40 and Ser44. Phosphoserine occurs at positions 48 and 51. Thr58 carries the post-translational modification Phosphothreonine. The short motif at 64-67 (RRVS) is the PP1-binding motif element. Position 67 is a phosphoserine; by PKA (Ser67). The CBM21 domain maps to 123-231 (EQLQVQKAVL…NNNGTNYILV (109 aa)). Disordered stretches follow at residues 385–420 (FYHS…GDTS), 479–501 (HGDS…KVDN), and 566–649 (PCPS…SDIA). A compositionally biased stretch (polar residues) spans 581 to 600 (SGSNLEPGTSDLSSPRNFSP). Residues 602–614 (TDDHLFQADRENS) are compositionally biased toward basic and acidic residues. Polar residues predominate over residues 615–625 (DSSNPENQNMN). The residue at position 821 (Ser821) is a Phosphoserine. Residues 949–968 (IMKSGSGGERGGGPILQQKE) are disordered. The segment covering 953-962 (GSGGERGGGP) has biased composition (gly residues). The chain crosses the membrane as a helical span at residues 1047–1067 (LLFLIFLATVYYYDLMIGLAF).

As to quaternary structure, interacts with PPP1CC catalytic subunit of PP1, and associates with glycogen. Post-translationally, phosphorylation at Ser-48 by ISPK stimulates the dephosphorylation of glycogen synthase and phosphorylase kinase. In terms of tissue distribution, skeletal muscle and heart.

It is found in the membrane. Functionally, seems to act as a glycogen-targeting subunit for PP1. PP1 is essential for cell division, and participates in the regulation of glycogen metabolism, muscle contractility and protein synthesis. Plays an important role in glycogen synthesis but is not essential for insulin activation of glycogen synthase. The polypeptide is Protein phosphatase 1 regulatory subunit 3A (Ppp1r3a) (Mus musculus (Mouse)).